The chain runs to 128 residues: Small ribosomal subunit protein bS6 (128 aa).

Residues 100 to 128 are disordered; it reads SPMAKAKEERFTRRDDERREEATEAASEE. Residues 104–121 are compositionally biased toward basic and acidic residues; the sequence is KAKEERFTRRDDERREEA.

This sequence belongs to the bacterial ribosomal protein bS6 family.

Binds together with bS18 to 16S ribosomal RNA. The sequence is that of Small ribosomal subunit protein bS6 from Aeromonas hydrophila subsp. hydrophila (strain ATCC 7966 / DSM 30187 / BCRC 13018 / CCUG 14551 / JCM 1027 / KCTC 2358 / NCIMB 9240 / NCTC 8049).